The chain runs to 431 residues: Enolase (431 aa).

Residue glutamine 166 coordinates (2R)-2-phosphoglycerate. The active-site Proton donor is glutamate 208. Aspartate 245, glutamate 288, and aspartate 315 together coordinate Mg(2+). Residues lysine 340, arginine 369, serine 370, and lysine 391 each coordinate (2R)-2-phosphoglycerate. Lysine 340 serves as the catalytic Proton acceptor.

This sequence belongs to the enolase family. It depends on Mg(2+) as a cofactor.

It localises to the cytoplasm. The protein localises to the secreted. The protein resides in the cell surface. The catalysed reaction is (2R)-2-phosphoglycerate = phosphoenolpyruvate + H2O. Its pathway is carbohydrate degradation; glycolysis; pyruvate from D-glyceraldehyde 3-phosphate: step 4/5. Catalyzes the reversible conversion of 2-phosphoglycerate (2-PG) into phosphoenolpyruvate (PEP). It is essential for the degradation of carbohydrates via glycolysis. This is Enolase from Clostridium botulinum (strain Okra / Type B1).